A 269-amino-acid chain; its full sequence is 5'-nucleotidase SurE (269 aa).

4 residues coordinate a divalent metal cation: aspartate 11, aspartate 12, serine 43, and asparagine 101.

The protein belongs to the SurE nucleotidase family. Requires a divalent metal cation as cofactor.

It localises to the cytoplasm. It carries out the reaction a ribonucleoside 5'-phosphate + H2O = a ribonucleoside + phosphate. In terms of biological role, nucleotidase that shows phosphatase activity on nucleoside 5'-monophosphates. In Prochlorococcus marinus (strain MIT 9303), this protein is 5'-nucleotidase SurE.